The following is a 527-amino-acid chain: N-acetylglutamate synthase, mitochondrial (527 aa).

The N-terminal 18 residues, 1–18, are a transit peptide targeting the mitochondrion; the sequence is MATAWVATALRSAAAARR. The disordered stretch occupies residues 14–91; the sequence is AAARRLRSPG…PLESPAPPAG (78 aa). The amino-acid kinase domain (AAK) stretch occupies residues 19–369; that stretch reads LRSPGGPGGS…CGTLFKNAER (351 aa). A compositionally biased stretch (basic and acidic residues) spans 54–63; the sequence is AHAEDAEGAK. Residues 77-89 are compositionally biased toward pro residues; sequence TPLPTPLESPAPP. The N-acetyltransferase domain maps to 368–519; that stretch reads ERMLRVRNLD…HAKGLPDSFC (152 aa). Residues Lys394, Lys437, and 467–472 contribute to the substrate site; that span reads RSRVTN.

It belongs to the acetyltransferase family. As to quaternary structure, homodimer. Homotetramer. In terms of processing, probably processed by mitochondrial processing peptidase (MPP). The long form has not yet been isolated. Highly expressed in the liver and small intestine. Weakly expressed in the kidney, spleen and testis.

It is found in the mitochondrion matrix. The enzyme catalyses L-glutamate + acetyl-CoA = N-acetyl-L-glutamate + CoA + H(+). Its pathway is amino-acid biosynthesis; L-arginine biosynthesis; N(2)-acetyl-L-ornithine from L-glutamate: step 1/4. Its activity is regulated as follows. Increased by L-arginine. Plays a role in the regulation of ureagenesis by producing the essential cofactor N-acetylglutamate (NAG), thus modulating carbamoylphosphate synthase I (CPS1) activity. In Mus musculus (Mouse), this protein is N-acetylglutamate synthase, mitochondrial (Nags).